The chain runs to 189 residues: Putative manganese efflux pump MntP (189 aa).

A run of 6 helical transmembrane segments spans residues 3–23 (PVSL…AAIG), 41–61 (IIFG…GQAA), 65–85 (VADW…LHMI), 106–128 (WILA…GLAF), 141–161 (GLAT…LGAV), and 168–188 (MVGG…HLSA).

This sequence belongs to the MntP (TC 9.B.29) family.

It is found in the cell inner membrane. Functionally, probably functions as a manganese efflux pump. The sequence is that of Putative manganese efflux pump MntP from Pseudomonas aeruginosa (strain LESB58).